We begin with the raw amino-acid sequence, 310 residues long: Glutaminase (310 aa).

Substrate contacts are provided by serine 67, asparagine 118, glutamate 161, asparagine 168, tyrosine 192, tyrosine 244, and valine 262.

It belongs to the glutaminase family. As to quaternary structure, homotetramer.

It catalyses the reaction L-glutamine + H2O = L-glutamate + NH4(+). The protein is Glutaminase of Legionella pneumophila (strain Corby).